The chain runs to 101 residues: Ribonuclease kappa-B (101 aa).

The next 2 membrane-spanning stretches (helical) occupy residues 13–33 (ACGI…GVFF) and 68–88 (VSYN…FSFC).

The protein belongs to the RNase K family.

The protein localises to the membrane. Functionally, endoribonuclease which preferentially cleaves ApU and ApG phosphodiester bonds. This is Ribonuclease kappa-B (rnasek-b) from Xenopus laevis (African clawed frog).